A 329-amino-acid chain; its full sequence is 4-hydroxythreonine-4-phosphate dehydrogenase (329 aa).

Substrate is bound by residues histidine 137 and threonine 138. Histidine 167, histidine 212, and histidine 267 together coordinate a divalent metal cation. 3 residues coordinate substrate: lysine 275, asparagine 284, and arginine 293.

The protein belongs to the PdxA family. As to quaternary structure, homodimer. Zn(2+) serves as cofactor. It depends on Mg(2+) as a cofactor. Requires Co(2+) as cofactor.

It localises to the cytoplasm. It catalyses the reaction 4-(phosphooxy)-L-threonine + NAD(+) = 3-amino-2-oxopropyl phosphate + CO2 + NADH. It participates in cofactor biosynthesis; pyridoxine 5'-phosphate biosynthesis; pyridoxine 5'-phosphate from D-erythrose 4-phosphate: step 4/5. In terms of biological role, catalyzes the NAD(P)-dependent oxidation of 4-(phosphooxy)-L-threonine (HTP) into 2-amino-3-oxo-4-(phosphooxy)butyric acid which spontaneously decarboxylates to form 3-amino-2-oxopropyl phosphate (AHAP). This is 4-hydroxythreonine-4-phosphate dehydrogenase from Stutzerimonas stutzeri (strain A1501) (Pseudomonas stutzeri).